Here is a 451-residue protein sequence, read N- to C-terminus: Glycylpeptide N-tetradecanoyltransferase (451 aa).

Tetradecanoyl-CoA contacts are provided by residues 177 to 179 (LCI) and 185 to 189 (NKRLA). Leu-451 acts as the Proton acceptor; via carboxylate in catalysis.

It belongs to the NMT family. Monomer.

Its subcellular location is the cytoplasm. The catalysed reaction is N-terminal glycyl-[protein] + tetradecanoyl-CoA = N-tetradecanoylglycyl-[protein] + CoA + H(+). With respect to regulation, competitively inhibited by SC-58272, a peptidomimetic derived from the N-terminal sequence of a natural substrate. Functionally, adds a myristoyl group to the N-terminal glycine residue of certain cellular proteins. Substrate specificity requires an N-terminal glycine in the nascent polypeptide substrates. Ser is present at position 5 in almost all known N-myristoyl proteins and Lys is commonly encountered at postion 6. Basic residues are preferred at positions 7 and 8. The polypeptide is Glycylpeptide N-tetradecanoyltransferase (NMT1) (Candida albicans (strain SC5314 / ATCC MYA-2876) (Yeast)).